A 282-amino-acid chain; its full sequence is HTH-type transcriptional activator RhaR (282 aa).

In terms of domain architecture, HTH araC/xylS-type spans 179 to 277 (DKLITRLAAS…GMTPSQWRHL (99 aa)). 2 consecutive DNA-binding regions (H-T-H motif) follow at residues 196–217 (DKFC…RQQT) and 244–267 (ISDI…TRET).

As to quaternary structure, binds DNA as a dimer.

The protein resides in the cytoplasm. Its function is as follows. Activates expression of the rhaSR operon in response to L-rhamnose. In Shigella flexneri serotype 5b (strain 8401), this protein is HTH-type transcriptional activator RhaR.